A 601-amino-acid chain; its full sequence is Elongation factor 4 (601 aa).

The region spanning 6-188 (SHIRNFSIIA…QIVHRVPAPE (183 aa)) is the tr-type G domain. GTP is bound by residues 18-23 (DHGKST) and 135-138 (NKID).

It belongs to the TRAFAC class translation factor GTPase superfamily. Classic translation factor GTPase family. LepA subfamily.

The protein resides in the cell inner membrane. It catalyses the reaction GTP + H2O = GDP + phosphate + H(+). Required for accurate and efficient protein synthesis under certain stress conditions. May act as a fidelity factor of the translation reaction, by catalyzing a one-codon backward translocation of tRNAs on improperly translocated ribosomes. Back-translocation proceeds from a post-translocation (POST) complex to a pre-translocation (PRE) complex, thus giving elongation factor G a second chance to translocate the tRNAs correctly. Binds to ribosomes in a GTP-dependent manner. This Anaeromyxobacter dehalogenans (strain 2CP-1 / ATCC BAA-258) protein is Elongation factor 4.